Reading from the N-terminus, the 268-residue chain is Proliferating cell nuclear antigen (268 aa).

Residues 61–80 (RCDRNPSMGMNLNNMAKMLK) mediate DNA binding.

It belongs to the PCNA family.

The protein localises to the nucleus. This protein is an auxiliary protein of DNA polymerase delta and is involved in the control of eukaryotic DNA replication by increasing the polymerase's processibility during elongation of the leading strand. This is Proliferating cell nuclear antigen from Catharanthus roseus (Madagascar periwinkle).